The sequence spans 456 residues: tRNA modification GTPase MnmE (456 aa).

(6S)-5-formyl-5,6,7,8-tetrahydrofolate-binding residues include Arg-25, Glu-87, and Arg-126. The TrmE-type G domain maps to 221–377; that stretch reads GLKVAIVGQP…LENAIIEQVN (157 aa). Asn-231 is a K(+) binding site. GTP is bound by residues 231-236, 250-256, and 275-278; these read NVGKSS, TDLPGTT, and DTAG. Ser-235 is a binding site for Mg(2+). Residues Thr-250, Leu-252, and Thr-255 each coordinate K(+). Thr-256 lines the Mg(2+) pocket. Lys-456 lines the (6S)-5-formyl-5,6,7,8-tetrahydrofolate pocket.

It belongs to the TRAFAC class TrmE-Era-EngA-EngB-Septin-like GTPase superfamily. TrmE GTPase family. As to quaternary structure, homodimer. Heterotetramer of two MnmE and two MnmG subunits. The cofactor is K(+).

The protein resides in the cytoplasm. In terms of biological role, exhibits a very high intrinsic GTPase hydrolysis rate. Involved in the addition of a carboxymethylaminomethyl (cmnm) group at the wobble position (U34) of certain tRNAs, forming tRNA-cmnm(5)s(2)U34. This Synechocystis sp. (strain ATCC 27184 / PCC 6803 / Kazusa) protein is tRNA modification GTPase MnmE.